Reading from the N-terminus, the 299-residue chain is Protein LacX, plasmid (299 aa).

The chain is Protein LacX, plasmid (lacX) from Lactococcus lactis subsp. lactis (Streptococcus lactis).